Reading from the N-terminus, the 318-residue chain is Ubiquitin-like domain-containing CTD phosphatase 1 (318 aa).

Ala2 bears the N-acetylalanine mark. The region spanning 3 to 81 (LPIIVKWGGQ…IMMMGTREES (79 aa)) is the Ubiquitin-like domain. Residue Lys117 is modified to N6-acetyllysine. The FCP1 homology domain occupies 133–294 (PREGKKLLVL…LKLTQYLKEI (162 aa)). Residues Asp143, Asp145, and Asp253 each contribute to the Mg(2+) site.

Mg(2+) is required as a cofactor.

The protein localises to the nucleus. The enzyme catalyses O-phospho-L-seryl-[protein] + H2O = L-seryl-[protein] + phosphate. The catalysed reaction is O-phospho-L-threonyl-[protein] + H2O = L-threonyl-[protein] + phosphate. In terms of biological role, dephosphorylates 26S nuclear proteasomes, thereby decreasing their proteolytic activity. Recruited to the 19S regulatory particle of the 26S proteasome through its interaction with 19S component PSMD2/RPN1. Once recruited, dephosphorylates 19S component PSMC2/RPT1 which impairs PSMC2 ATPase activity and disrupts 26S proteasome assembly. Has also been reported to stimulate the proteolytic activity of the 26S proteasome. The chain is Ubiquitin-like domain-containing CTD phosphatase 1 (UBLCP1) from Pongo abelii (Sumatran orangutan).